A 548-amino-acid chain; its full sequence is Guanine nucleotide-binding protein-like 3 (548 aa).

Over residues 1–45 (MKRPKLKKGSKRLSCHKRYKIQKKVREHNRKARKEAKKSGTRKQK) the composition is skewed to basic residues. A disordered region spans residues 1–118 (MKRPKLKKGS…KKNKGTKAAE (118 aa)). Positions 58–114 (AEILQEAQRRRQQEEELKQNRKLERQKEVAKRRKLDEKKKKNSEKREKRDNKKNKGT) form a coiled coil. Over residues 64 to 107 (AQRRRQQEEELKQNRKLERQKEVAKRRKLDEKKKKNSEKREKRD) the composition is skewed to basic and acidic residues. In terms of domain architecture, CP-type G spans 125 to 305 (CRHVNKVLEQ…MLDSPALVVS (181 aa)). GTP-binding positions include 172–175 (NKAD), 256–263 (ANVGKSSV), and 298–301 (DSPA). A disordered region spans residues 459-548 (RQLVEPEPIE…DAYDFNTDFV (90 aa)). Positions 465–497 (EPIEEELEANDGEEDVEEEHEGSEEEEDEEVEQ) are enriched in acidic residues. Over residues 501–523 (SAKEQEVVSAKEQEVVSAKEQDS) the composition is skewed to basic and acidic residues. The span at 524-534 (KSAGPSVSFDQ) shows a compositional bias: polar residues.

Belongs to the TRAFAC class YlqF/YawG GTPase family.

The protein localises to the nucleus. It is found in the nucleolus. Its function is as follows. May play a role in regulating cellular proliferation. This chain is Guanine nucleotide-binding protein-like 3 (gnl3), found in Xenopus tropicalis (Western clawed frog).